The sequence spans 216 residues: Adenylate kinase (216 aa).

10 to 15 contributes to the ATP binding site; that stretch reads GAGKGT. Residues 30–59 are NMP; it reads STGDMLRAAVAAGTEVGKRAKAVMDAGKLV. Residues threonine 31, arginine 36, 57–59, 85–88, and glutamine 92 each bind AMP; these read KLV and GFPR. Residues 126-163 form an LID region; that stretch reads GRYTCANCGAGYHDENLRPKVEGVCDRCGSTHFKRRAD. ATP is bound at residue arginine 127. The Zn(2+) site is built by cysteine 130, cysteine 133, cysteine 150, and cysteine 153. The AMP site is built by arginine 160 and arginine 172. Alanine 200 is a binding site for ATP.

Belongs to the adenylate kinase family. As to quaternary structure, monomer.

Its subcellular location is the cytoplasm. The catalysed reaction is AMP + ATP = 2 ADP. It functions in the pathway purine metabolism; AMP biosynthesis via salvage pathway; AMP from ADP: step 1/1. Functionally, catalyzes the reversible transfer of the terminal phosphate group between ATP and AMP. Plays an important role in cellular energy homeostasis and in adenine nucleotide metabolism. The protein is Adenylate kinase of Rhizobium rhizogenes (strain K84 / ATCC BAA-868) (Agrobacterium radiobacter).